The primary structure comprises 127 residues: Putative histone H3.3-like type 3 (127 aa).

An N6-acetyllysine mark is found at K6 and K15. An N6-methylated lysine mark is found at K19, K28, and K71.

This sequence belongs to the histone H3 family. The nucleosome is a histone octamer containing two molecules each of H2A, H2B, H3 and H4 assembled in one H3-H4 heterotetramer and two H2A-H2B heterodimers. The octamer wraps approximately 147 bp of DNA. In terms of processing, acetylation is generally linked to gene activation.

Its subcellular location is the nucleus. It localises to the chromosome. In terms of biological role, putative variant histone H3 which may replace conventional H3 in a subset of nucleosomes. Nucleosomes wrap and compact DNA into chromatin, limiting DNA accessibility to the cellular machineries which require DNA as a template. Histones thereby play a central role in transcription regulation, DNA repair, DNA replication and chromosomal stability. DNA accessibility is regulated via a complex set of post-translational modifications of histones, also called histone code, and nucleosome remodeling. This Caenorhabditis elegans protein is Putative histone H3.3-like type 3 (his-69).